The following is a 625-amino-acid chain: Chromatin structure-remodeling complex subunit RSC4 (625 aa).

The disordered stretch occupies residues 1-35 (MVVKKRKLATEAGGSDERPKYLPGKHPKNQEKTPH). 2 Bromo domains span residues 53–158 (WHIP…VLKA) and 181–292 (KLVD…IQKE). 2 positions are modified to phosphoserine: Ser199 and Ser545. Residues 536 to 552 (RTSNVNSNLSQPQQQEN) are compositionally biased toward polar residues. The segment at 536 to 555 (RTSNVNSNLSQPQQQENDVI) is disordered.

As to quaternary structure, component of the two forms of the RSC complex composed of at least either RSC1 or RSC2, and ARP7, ARP9, LDB7, NPL6, RSC3, RSC30, RSC4, RSC58, RSC6, RSC8, RSC9, SFH1, STH1, HTL1 and probably RTT102. The complexes interact with histone and histone variant components of centromeric chromatin.

It localises to the nucleus. In terms of biological role, component of the chromatin structure remodeling complex (RSC), which is involved in transcription regulation and nucleosome positioning. RSC is responsible for the transfer of a histone octamer from a nucleosome core particle to naked DNA. The reaction requires ATP and involves an activated RSC-nucleosome intermediate. Remodeling reaction also involves DNA translocation, DNA twist and conformational change. As a reconfigurer of centromeric and flanking nucleosomes, RSC complex is required both for proper kinetochore function in chromosome segregation and, via a PKC1-dependent signaling pathway, for organization of the cellular cytoskeleton. This is Chromatin structure-remodeling complex subunit RSC4 (RSC4) from Saccharomyces cerevisiae (strain ATCC 204508 / S288c) (Baker's yeast).